The chain runs to 715 residues: Polyribonucleotide nucleotidyltransferase (715 aa).

2 residues coordinate Mg(2+): D493 and D499. The KH domain occupies 560 to 619 (PRMITIKINPEKIRDVIGKGGSVIRALTEETGTTIDISDDGVVTIASTNSDGMAEAKKRI). Positions 629-697 (GQVYEGTVLK…EKGRVRLSAK (69 aa)) constitute an S1 motif domain.

This sequence belongs to the polyribonucleotide nucleotidyltransferase family. The cofactor is Mg(2+).

It localises to the cytoplasm. The enzyme catalyses RNA(n+1) + phosphate = RNA(n) + a ribonucleoside 5'-diphosphate. Involved in mRNA degradation. Catalyzes the phosphorolysis of single-stranded polyribonucleotides processively in the 3'- to 5'-direction. The protein is Polyribonucleotide nucleotidyltransferase of Burkholderia lata (strain ATCC 17760 / DSM 23089 / LMG 22485 / NCIMB 9086 / R18194 / 383).